A 166-amino-acid polypeptide reads, in one-letter code: Putative signal peptidase complex catalytic subunit SEC11B (166 aa).

Residues 1–6 (MNKWRL) lie on the Cytoplasmic side of the membrane. Residues 7–24 (YYQVLNFGMIVSSALMIW) traverse the membrane as a helical; Signal-anchor for type II membrane protein segment. The Extracellular portion of the chain corresponds to 25–166 (KGLMVITGSE…LGLFVLVHRE (142 aa)). The active site involves Ser43.

It belongs to the peptidase S26B family.

The protein localises to the membrane. The catalysed reaction is Cleavage of hydrophobic, N-terminal signal or leader sequences from secreted and periplasmic proteins.. Functionally, putative component of some signal peptidase complex which removes signal peptides from nascent proteins as they are translocated into the lumen of the endoplasmic reticulum. The sequence is that of Putative signal peptidase complex catalytic subunit SEC11B (SEC11B) from Homo sapiens (Human).